We begin with the raw amino-acid sequence, 149 residues long: Large ribosomal subunit protein bL20m (149 aa).

Residues 1–9 (MVFLSLSRW) constitute a mitochondrion transit peptide.

This sequence belongs to the bacterial ribosomal protein bL20 family. Component of the mitochondrial ribosome large subunit (39S) which comprises a 16S rRNA and about 50 distinct proteins.

Its subcellular location is the mitochondrion. The sequence is that of Large ribosomal subunit protein bL20m (mrpl20) from Xenopus laevis (African clawed frog).